The primary structure comprises 205 residues: High frequency lysogenization protein HflD homolog (205 aa).

Belongs to the HflD family.

The protein localises to the cytoplasm. It is found in the cell inner membrane. The polypeptide is High frequency lysogenization protein HflD homolog (Shewanella baltica (strain OS223)).